A 695-amino-acid chain; its full sequence is Polyribonucleotide nucleotidyltransferase (695 aa).

Residues aspartate 486 and aspartate 492 each contribute to the Mg(2+) site. One can recognise a KH domain in the interval 553 to 612 (PRIETMQINTSKIATVIGPGGKQIRQIIERSGAQVDINDDGVINIAASTQESINKAKELI). The 69-residue stretch at 622–690 (GKVYNGRVTS…EKGQLKLSHK (69 aa)) folds into the S1 motif domain.

The protein belongs to the polyribonucleotide nucleotidyltransferase family. Mg(2+) serves as cofactor.

It is found in the cytoplasm. The catalysed reaction is RNA(n+1) + phosphate = RNA(n) + a ribonucleoside 5'-diphosphate. Functionally, involved in mRNA degradation. Catalyzes the phosphorolysis of single-stranded polyribonucleotides processively in the 3'- to 5'-direction. This is Polyribonucleotide nucleotidyltransferase from Chlamydia trachomatis serovar A (strain ATCC VR-571B / DSM 19440 / HAR-13).